The sequence spans 401 residues: Enoyl-[acyl-carrier-protein] reductase [NADH] (401 aa).

NAD(+) contacts are provided by residues 48–53 (GASSGY), 74–75 (FE), 111–112 (DA), and 140–141 (LA). Residue Tyr226 participates in substrate binding. The Proton donor role is filled by Tyr236. NAD(+) is bound by residues Lys245 and 274–276 (VVT).

The protein belongs to the TER reductase family. As to quaternary structure, monomer.

It carries out the reaction a 2,3-saturated acyl-[ACP] + NAD(+) = a (2E)-enoyl-[ACP] + NADH + H(+). The protein operates within lipid metabolism; fatty acid biosynthesis. Functionally, involved in the final reduction of the elongation cycle of fatty acid synthesis (FAS II). Catalyzes the reduction of a carbon-carbon double bond in an enoyl moiety that is covalently linked to an acyl carrier protein (ACP). The polypeptide is Enoyl-[acyl-carrier-protein] reductase [NADH] (Xylella fastidiosa (strain 9a5c)).